Reading from the N-terminus, the 450-residue chain is Tubulin alpha chain (450 aa).

Gln11 provides a ligand contact to GTP. At Lys40 the chain carries N6-acetyllysine. Glu71, Ser140, Gly144, Thr145, Thr179, Asn206, and Asn228 together coordinate GTP. A Mg(2+)-binding site is contributed by Glu71. Glu254 is a catalytic residue.

Belongs to the tubulin family. As to quaternary structure, dimer of alpha and beta chains. A typical microtubule is a hollow water-filled tube with an outer diameter of 25 nm and an inner diameter of 15 nM. Alpha-beta heterodimers associate head-to-tail to form protofilaments running lengthwise along the microtubule wall with the beta-tubulin subunit facing the microtubule plus end conferring a structural polarity. Microtubules usually have 13 protofilaments but different protofilament numbers can be found in some organisms and specialized cells. Mg(2+) serves as cofactor. Acetylation of alpha chains at Lys-40 stabilizes microtubules and affects affinity and processivity of microtubule motors. This modification has a role in multiple cellular functions, ranging from cell motility, cell cycle progression or cell differentiation to intracellular trafficking and signaling.

It localises to the cytoplasm. Its subcellular location is the cytoskeleton. The enzyme catalyses GTP + H2O = GDP + phosphate + H(+). Functionally, tubulin is the major constituent of microtubules, a cylinder consisting of laterally associated linear protofilaments composed of alpha- and beta-tubulin heterodimers. Microtubules grow by the addition of GTP-tubulin dimers to the microtubule end, where a stabilizing cap forms. Below the cap, tubulin dimers are in GDP-bound state, owing to GTPase activity of alpha-tubulin. This chain is Tubulin alpha chain, found in Euplotoides octocarinatus (Freshwater ciliate).